We begin with the raw amino-acid sequence, 430 residues long: UDP-N-acetylglucosamine 1-carboxyvinyltransferase (430 aa).

22–23 (KN) lines the phosphoenolpyruvate pocket. Residue arginine 102 coordinates UDP-N-acetyl-alpha-D-glucosamine. The Proton donor role is filled by cysteine 126. Residue cysteine 126 is modified to 2-(S-cysteinyl)pyruvic acid O-phosphothioketal. UDP-N-acetyl-alpha-D-glucosamine is bound by residues 131 to 135 (RPVDL), 172 to 175 (KVSV), aspartate 317, and isoleucine 339.

Belongs to the EPSP synthase family. MurA subfamily.

The protein localises to the cytoplasm. It carries out the reaction phosphoenolpyruvate + UDP-N-acetyl-alpha-D-glucosamine = UDP-N-acetyl-3-O-(1-carboxyvinyl)-alpha-D-glucosamine + phosphate. It participates in cell wall biogenesis; peptidoglycan biosynthesis. Its function is as follows. Cell wall formation. Adds enolpyruvyl to UDP-N-acetylglucosamine. This is UDP-N-acetylglucosamine 1-carboxyvinyltransferase from Agrobacterium fabrum (strain C58 / ATCC 33970) (Agrobacterium tumefaciens (strain C58)).